Consider the following 226-residue polypeptide: Protein BASIC PENTACYSTEINE7 (226 aa).

The disordered stretch occupies residues Ile42 to Lys116. Residues Arg66–Lys76 show a composition bias toward basic and acidic residues. Basic residues predominate over residues Leu88–Lys105.

The protein belongs to the BBR/BPC family. Expressed in seedlings, leaves and pistils. Detected in anthers, in pollen grains, in young rosette, in leaf vasculature, in the lateral and primary roots, in embryo sac, and in the whole ovule.

The protein resides in the nucleus. Its function is as follows. Transcriptional regulator that specifically binds to GA-rich elements (GAGA-repeats) present in regulatory sequences of genes involved in developmental processes. This is Protein BASIC PENTACYSTEINE7 (BPC7) from Arabidopsis thaliana (Mouse-ear cress).